The chain runs to 991 residues: Toll-like receptor 13 (991 aa).

A signal peptide spans 1–68; it reads MSGLYRILVQ…GFSLPPVAET (68 aa). The Extracellular portion of the chain corresponds to 69-783; that stretch reads YGFNKCTQYE…DAMCNFDLGK (715 aa). N93, N109, and N125 each carry an N-linked (GlcNAc...) asparagine glycan. LRR repeat units follow at residues 104-125, 128-149, 152-174, 175-196, 199-220, 225-246, 248-268, 271-292, 295-315, 318-338, 348-368, 372-394, 397-418, 421-442, 445-466, 469-490, 493-514, 517-538, 541-562, 565-585, 594-617, 620-641, 644-665, 672-693, and 696-716; these read YTTH…SFTN, ALVD…AFRG, NLTL…EGLS, SLKT…AFTP, KLKY…LEAV, CLER…PRSL, SLTH…SALS, NLTN…YLKT, QLKS…SAKH, NLRA…DMKT, KLET…KQLA, RLLF…EFNA, SLQK…TWSS, NLTS…AFSP, HLEF…AFSG, ALKE…SFTQ, NLEV…TFRP, KLQS…SFSG, NLRS…LFSG, KLLI…RTLQ, SLKQ…FFQG, SLQE…QFDP, NLTK…LNAS, RLKI…MFSS, and SLQV…SHLK. N-linked (GlcNAc...) asparagine glycans are attached at residues N152 and N167. 7 N-linked (GlcNAc...) asparagine glycosylation sites follow: N209, N233, N263, N271, N274, N300, and N310. N-linked (GlcNAc...) asparagine glycans are attached at residues N357, N388, N413, and N421. N-linked (GlcNAc...) asparagine glycans are attached at residues N644 and N663. Residues N711 and N742 are each glycosylated (N-linked (GlcNAc...) asparagine). Residues 729–779 enclose the LRRCT domain; that stretch reads NKLQCTCDNLWFKNWSMNTEEVHIPFLRSYPCQQPGSQSLLIDFDDAMCNF. A helical transmembrane segment spans residues 784–804; it reads VYFLCSFSMVLSTMVFSWFST. The Cytoplasmic segment spans residues 805–991; the sequence is KMIASLWYGL…KENTHLIVVE (187 aa). Residues 832–975 enclose the TIR domain; sequence FLYDAFVSFS…LFWARIRNAL (144 aa).

This sequence belongs to the Toll-like receptor family. As to quaternary structure, binds MYD88 via their respective TIR domains. Interacts with UNC93B1.

The protein resides in the endosome membrane. Functionally, component of innate and adaptive immunity that recognizes and binds 23S rRNA from bacteria. TLRs (Toll-like receptors) control host immune response against pathogens through recognition of molecular patterns specific to microorganisms. Acts via MYD88 and TRAF6, leading to NF-kappa-B activation, cytokine secretion and the inflammatory response. Specifically binds the 5'-CGGAAAGACC-3' sequence on bacterial 23S rRNA, a sequence also bound by MLS group antibiotics (including erythromycin). May also recognize vesicular stomatitis virus; however, these data require additional evidences. The chain is Toll-like receptor 13 (Tlr13) from Mus musculus (Mouse).